The sequence spans 446 residues: Tektin-4 (446 aa).

Coiled-coil stretches lie at residues 182-215, 297-346, and 378-422; these read IRNV…MDYS, DAIA…NDKS, and SEVG…ANSI.

Belongs to the tektin family.

The protein localises to the cytoplasm. It localises to the cytoskeleton. Its subcellular location is the cilium axoneme. The protein resides in the cell projection. It is found in the cilium. The protein localises to the flagellum. Its function is as follows. Microtubule inner protein (MIP) part of the dynein-decorated doublet microtubules (DMTs) in cilia and flagellar axoneme. Forms filamentous polymers in the walls of ciliary and flagellar microtubules. Contributes to normal sperm motility. The sequence is that of Tektin-4 (tekt4) from Xenopus laevis (African clawed frog).